Reading from the N-terminus, the 500-residue chain is MSFENLHKVNAEALEDAVVEICSSLQVDAAKLDELTAYFIECMEKGLNNTSVGEEKTVDKGLPMIPTYVTSLPNGTERGVLLAADLGGTHFRVCSVTLNGDGTFDMQQLKSKIPEEYLNDKDVTSEELFSYLGRRTRAFVRKHHPELLKSTGENIKPLKMGFTFSYPVDQTSLSSGTLIRWTKSFKIEDTVGKDVVRLYQEQLDIQGLSMINVVALTNDTVGTFLSHCYTSGSRPSSAGEISEPVIGCIFGTGTNGCYMEDIENIKKLPDELRTRLLHEGKTQMCINIEWGSFDNELKHLSATKYDIDIDQKFSPNPGYHLFEKRISGMYLGELLRNILVDLHARGLILGQYRNYDQLPHRLKTPFQLCSEVLSRIEIDDSTNLRETELSFLQSLRLPTTFEERKAIQNLVRSITRRSAYLAAVPIAAILIKTNALNKRYHGEVEIGFDGYVIEYYPGFRSMLRHALALSPIGTEGERKIHLRLAKDGSGVGAALCALVA.

N-acetylserine is present on S2. S2 is modified (phosphoserine). The region spanning 12 to 498 (EALEDAVVEI…SGVGAALCAL (487 aa)) is the Hexokinase domain. The interval 74 to 217 (NGTERGVLLA…LSMINVVALT (144 aa)) is hexokinase small subdomain. ATP is bound at residue K110. The segment at 159-185 (KMGFTFSYPVDQTSLSSGTLIRWTKSF) is glucose-binding. Residues 218 to 487 (NDTVGTFLSH…RKIHLRLAKD (270 aa)) are hexokinase large subdomain. S470 bears the Phosphoserine mark. 487–492 (DGSGVG) is an ATP binding site.

Belongs to the hexokinase family.

It localises to the cytoplasm. The catalysed reaction is D-glucose + ATP = D-glucose 6-phosphate + ADP + H(+). It functions in the pathway carbohydrate degradation; glycolysis; D-glyceraldehyde 3-phosphate and glycerone phosphate from D-glucose: step 1/4. Putative glucokinase involved in phosphorylation of aldohexoses and glucose uptake. Involved in sporulation. Required for the full activation of the early meiotic inducer IME1. This chain is Putative glucokinase-2 (EMI2), found in Saccharomyces cerevisiae (strain ATCC 204508 / S288c) (Baker's yeast).